The sequence spans 196 residues: MPKVQSNKSKQEKVIHPYSRKAAQLTREAHKQDRKDRLKSEKALRLSIIGEKLQWFQSHLNPEKAEYTKKEACELIESYLHRFDNELEQIELHNSIKGRQTRRHESRETVIKQTIERERQLYNGYGIEIPDIVNSRNLKVFRDWDLDMKKLPNIKMRKISISDSLSKSDKDVPGSNDEIENELGSNEESMPDFQES.

Disordered regions lie at residues 1–37 (MPKV…RKDR) and 162–196 (SDSL…FQES). Residues 27 to 37 (REAHKQDRKDR) show a composition bias toward basic and acidic residues.

This sequence belongs to the TMA16 family. In terms of assembly, associates with pre-60S ribosomal particles.

The protein localises to the nucleus. Involved in the biogenesis of the 60S ribosomal subunit in the nucleus. This chain is Translation machinery-associated protein 16 (tma16), found in Xenopus laevis (African clawed frog).